The sequence spans 193 residues: Acyl carrier protein phosphodiesterase (193 aa).

It belongs to the AcpH family.

The enzyme catalyses holo-[ACP] + H2O = apo-[ACP] + (R)-4'-phosphopantetheine + H(+). In terms of biological role, converts holo-ACP to apo-ACP by hydrolytic cleavage of the phosphopantetheine prosthetic group from ACP. This is Acyl carrier protein phosphodiesterase from Salmonella agona (strain SL483).